Here is a 185-residue protein sequence, read N- to C-terminus: NADH-quinone oxidoreductase subunit B (185 aa).

The [4Fe-4S] cluster site is built by Cys-38, Cys-39, Cys-104, and Cys-133. Residues 165–176 (AAEAYREEERQA) are compositionally biased toward basic and acidic residues. Positions 165-185 (AAEAYREEERQAARSALGPRS) are disordered.

This sequence belongs to the complex I 20 kDa subunit family. NDH-1 is composed of 14 different subunits. Subunits NuoB, C, D, E, F, and G constitute the peripheral sector of the complex. Requires [4Fe-4S] cluster as cofactor.

It localises to the cell membrane. The catalysed reaction is a quinone + NADH + 5 H(+)(in) = a quinol + NAD(+) + 4 H(+)(out). In terms of biological role, NDH-1 shuttles electrons from NADH, via FMN and iron-sulfur (Fe-S) centers, to quinones in the respiratory chain. The immediate electron acceptor for the enzyme in this species is believed to be ubiquinone. Couples the redox reaction to proton translocation (for every two electrons transferred, four hydrogen ions are translocated across the cytoplasmic membrane), and thus conserves the redox energy in a proton gradient. This Thermomicrobium roseum (strain ATCC 27502 / DSM 5159 / P-2) protein is NADH-quinone oxidoreductase subunit B.